A 462-amino-acid chain; its full sequence is ATP synthase subunit beta (462 aa).

151–158 (GGAGVGKT) lines the ATP pocket.

It belongs to the ATPase alpha/beta chains family. As to quaternary structure, F-type ATPases have 2 components, CF(1) - the catalytic core - and CF(0) - the membrane proton channel. CF(1) has five subunits: alpha(3), beta(3), gamma(1), delta(1), epsilon(1). CF(0) has three main subunits: a(1), b(2) and c(9-12). The alpha and beta chains form an alternating ring which encloses part of the gamma chain. CF(1) is attached to CF(0) by a central stalk formed by the gamma and epsilon chains, while a peripheral stalk is formed by the delta and b chains.

It localises to the cell inner membrane. It carries out the reaction ATP + H2O + 4 H(+)(in) = ADP + phosphate + 5 H(+)(out). Produces ATP from ADP in the presence of a proton gradient across the membrane. The catalytic sites are hosted primarily by the beta subunits. This chain is ATP synthase subunit beta, found in Chlorobaculum parvum (strain DSM 263 / NCIMB 8327) (Chlorobium vibrioforme subsp. thiosulfatophilum).